Reading from the N-terminus, the 523-residue chain is Protein disulfide-isomerase (523 aa).

Residues 1–22 (MPGVRSLLLALAGVSLAPAVLA) form the signal peptide. A Thioredoxin 1 domain is found at 24 to 137 (DASTDSSDVH…TSYMIKQSLP (114 aa)). Catalysis depends on nucleophile residues cysteine 59 and cysteine 62. Cysteine 59 and cysteine 62 are disulfide-bonded. Residue asparagine 170 is glycosylated (N-linked (GlcNAc...) asparagine). The Thioredoxin 2 domain maps to 344–475 (VIAGDIAPSV…LANFVRDNGK (132 aa)). Cysteine 394 and cysteine 397 are oxidised to a cystine. Composition is skewed to basic and acidic residues over residues 478 to 502 (VDAY…DAEA) and 512 to 523 (SEEKADKEHEEL). The segment at 478–523 (VDAYDEKKVEKDGSDVTGKPKDAEAPPKPSDAPESEEKADKEHEEL) is disordered. The Prevents secretion from ER motif lies at 520-523 (HEEL).

This sequence belongs to the protein disulfide isomerase family.

It is found in the endoplasmic reticulum lumen. The catalysed reaction is Catalyzes the rearrangement of -S-S- bonds in proteins.. In terms of biological role, participates in the folding of proteins containing disulfide bonds, may be involved in glycosylation, prolyl hydroxylation and triglyceride transfer. This Arthroderma benhamiae (strain ATCC MYA-4681 / CBS 112371) (Trichophyton mentagrophytes) protein is Protein disulfide-isomerase.